A 102-amino-acid polypeptide reads, in one-letter code: 10 kDa heat shock protein, mitochondrial (102 aa).

It belongs to the GroES chaperonin family. As to quaternary structure, homohexamer.

The protein resides in the mitochondrion matrix. Functionally, eukaryotic CPN10 homolog which is essential for mitochondrial protein biogenesis, together with CPN60. Binds to CPN60 in the presence of Mg-ATP and suppresses the ATPase activity of the latter. The polypeptide is 10 kDa heat shock protein, mitochondrial (Schistosoma japonicum (Blood fluke)).